The sequence spans 467 residues: Zinc finger protein mex-6 (467 aa).

Low complexity-rich tracts occupy residues 1–22 (MTATSNSAPLAGGSLSSSATAQ) and 179–195 (STTRTVPLTSSTPLPTS). 2 disordered regions span residues 1–35 (MTATSNSAPLAGGSLSSSATAQPPQPPPGHQQQHP) and 163–209 (TNPQ…NRNS). Thr-190 carries the phosphothreonine modification. The segment covering 196–207 (REYETVQRDRNR) has biased composition (basic and acidic residues). C3H1-type zinc fingers lie at residues 273-302 (NFKTRLCMTHAAGINPCALGARCKFAHGLK) and 317-347 (KYKTKLCKNFARGGSGVCPYGLRCEFVHPSD). A disordered region spans residues 425 to 451 (INENDLPPHLRRIRRGNPPVTRSRPSF). Ser-457 is subject to Phosphoserine.

As to quaternary structure, interacts (probably when phosphorylated on Thr-190) with plk-1 (via POLO box domain) and plk-2 (via POLO box domain). Phosphorylation on Ser-457 by par-1 promotes localization of the protein to the anterior cytoplasm of the zygote.

It is found in the cytoplasm. Functionally, functions with mex-5 to affect embryonic viability, establish soma germline asymmetry in embryos and establish plk-1, pie-1, mex-1, and pos-1 asymmetry in embryos. Also affects formation of intestinal cells. In Caenorhabditis elegans, this protein is Zinc finger protein mex-6 (mex-6).